A 355-amino-acid chain; its full sequence is MIERFMRNDKDRPSARDGQQNGTNDDSYFVKFLHWIITLDTYDGSSRNYGRMTETTNYTFFFGGRVRTVTKTSVYSIVVFAMFIVPLILFSIFECNYLWHHKGTNWKPAIVILYYFYLLTICSFLRAACSDPGIVPRNVHIPDLNASYKIPQEYYNYAILPTKNPNASVSMKYCQTCRIWRPPRSAHCSVCDVCVLSHDHHCKWLNNCIGKRNYRFFLEFLMASTISCILLILLSSFRLSYSPQVRYTPVSLLIICYCGLGIWYPLILFIYHIFLAGTQQTTHEYLRSIGSKHPIFHKITRNRDSPYDRNSMFFNLIHLWFQERGWNLVDPRRKQHYPADIRFRKLPEAHSFETV.

The span at 1–15 shows a compositional bias: basic and acidic residues; the sequence is MIERFMRNDKDRPSA. The interval 1-23 is disordered; it reads MIERFMRNDKDRPSARDGQQNGT. At 1 to 72 the chain is on the cytoplasmic side; the sequence is MIERFMRNDK…GGRVRTVTKT (72 aa). Residues 73–93 form a helical membrane-spanning segment; it reads SVYSIVVFAMFIVPLILFSIF. The Lumenal segment spans residues 94-108; that stretch reads ECNYLWHHKGTNWKP. The chain crosses the membrane as a helical span at residues 109 to 129; it reads AIVILYYFYLLTICSFLRAAC. Residues 130–215 are Cytoplasmic-facing; that stretch reads SDPGIVPRNV…NNCIGKRNYR (86 aa). In terms of domain architecture, DHHC spans 172 to 222; the sequence is KYCQTCRIWRPPRSAHCSVCDVCVLSHDHHCKWLNNCIGKRNYRFFLEFLM. C202 serves as the catalytic S-palmitoyl cysteine intermediate. A helical transmembrane segment spans residues 216 to 236; sequence FFLEFLMASTISCILLILLSS. Over 237–249 the chain is Lumenal; it reads FRLSYSPQVRYTP. The chain crosses the membrane as a helical span at residues 250 to 270; the sequence is VSLLIICYCGLGIWYPLILFI. The Cytoplasmic portion of the chain corresponds to 271–355; sequence YHIFLAGTQQ…LPEAHSFETV (85 aa).

Belongs to the DHHC palmitoyltransferase family. ERF2/ZDHHC9 subfamily. Interacts with ERF4. Autopalmitoylated.

Its subcellular location is the endoplasmic reticulum membrane. The enzyme catalyses L-cysteinyl-[protein] + hexadecanoyl-CoA = S-hexadecanoyl-L-cysteinyl-[protein] + CoA. The ERF2-ERF4 complex is a palmitoyltransferase specific for Ras proteins. The polypeptide is Palmitoyltransferase ERF2 (ERF2) (Kluyveromyces lactis (strain ATCC 8585 / CBS 2359 / DSM 70799 / NBRC 1267 / NRRL Y-1140 / WM37) (Yeast)).